A 249-amino-acid polypeptide reads, in one-letter code: MPHWLILDAGNSRLKFGLWDGHRVHATGAVSWSGDWPGELDMALAAMARPERVVVGSVHQTATVEALEAISRRRWGCPLTRITTTAAACGVQNGYRDYRQLGVDRWAAVVAAHLRAPEAWHLVIDVGTAATVDVVGPRGDYRGGAIFPGLRLLADALGSGTAGLPSLAGEAVPLPARSTPDAIRGGVVHGLAGALRHLASEMLPAEAVRPRRWLTGGDAGRLQPLLPQGAVWAPDLVLEGLAQLARESG.

Asp-8 to Lys-15 lines the ATP pocket. Substrate-binding positions include Tyr-95 and Gly-102 to Arg-105. Asp-104 functions as the Proton acceptor in the catalytic mechanism. Position 125 (Asp-125) interacts with K(+). Thr-128 serves as a coordination point for ATP. Residue Thr-179 coordinates substrate.

The protein belongs to the type III pantothenate kinase family. As to quaternary structure, homodimer. The cofactor is NH4(+). It depends on K(+) as a cofactor.

It localises to the cytoplasm. The enzyme catalyses (R)-pantothenate + ATP = (R)-4'-phosphopantothenate + ADP + H(+). The protein operates within cofactor biosynthesis; coenzyme A biosynthesis; CoA from (R)-pantothenate: step 1/5. In terms of biological role, catalyzes the phosphorylation of pantothenate (Pan), the first step in CoA biosynthesis. This Alkalilimnicola ehrlichii (strain ATCC BAA-1101 / DSM 17681 / MLHE-1) protein is Type III pantothenate kinase.